We begin with the raw amino-acid sequence, 208 residues long: Protein GrpE (208 aa).

Basic and acidic residues predominate over residues 1–25 (MVDNKDFNEELKENIQEELDNETKA). The interval 1–38 (MVDNKDFNEELKENIQEELDNETKAENPNIDEEVEEVS) is disordered. Residues 29-38 (NIDEEVEEVS) are compositionally biased toward acidic residues.

The protein belongs to the GrpE family. Homodimer.

It localises to the cytoplasm. In terms of biological role, participates actively in the response to hyperosmotic and heat shock by preventing the aggregation of stress-denatured proteins, in association with DnaK and GrpE. It is the nucleotide exchange factor for DnaK and may function as a thermosensor. Unfolded proteins bind initially to DnaJ; upon interaction with the DnaJ-bound protein, DnaK hydrolyzes its bound ATP, resulting in the formation of a stable complex. GrpE releases ADP from DnaK; ATP binding to DnaK triggers the release of the substrate protein, thus completing the reaction cycle. Several rounds of ATP-dependent interactions between DnaJ, DnaK and GrpE are required for fully efficient folding. This Clostridium perfringens (strain ATCC 13124 / DSM 756 / JCM 1290 / NCIMB 6125 / NCTC 8237 / Type A) protein is Protein GrpE.